Consider the following 223-residue polypeptide: RNA-free ribonuclease P (223 aa).

This sequence belongs to the HARP family.

The catalysed reaction is Endonucleolytic cleavage of RNA, removing 5'-extranucleotides from tRNA precursor.. Its function is as follows. RNA-free RNase P that catalyzes the removal of the 5'-leader sequence from pre-tRNA to produce the mature 5'-terminus. The sequence is that of RNA-free ribonuclease P from Methanococcus maripaludis (strain C7 / ATCC BAA-1331).